The sequence spans 225 residues: Lipoprotein-releasing system ATP-binding protein LolD (225 aa).

The region spanning 5-225 (LEVMDLTKGY…RLVDGRVVAD (221 aa)) is the ABC transporter domain. 41–48 (GASGTGKS) contributes to the ATP binding site.

Belongs to the ABC transporter superfamily. Lipoprotein translocase (TC 3.A.1.125) family. The complex is composed of two ATP-binding proteins (LolD) and two transmembrane proteins (LolC and LolE).

It localises to the cell inner membrane. Part of the ABC transporter complex LolCDE involved in the translocation of mature outer membrane-directed lipoproteins, from the inner membrane to the periplasmic chaperone, LolA. Responsible for the formation of the LolA-lipoprotein complex in an ATP-dependent manner. The sequence is that of Lipoprotein-releasing system ATP-binding protein LolD from Geobacter metallireducens (strain ATCC 53774 / DSM 7210 / GS-15).